The primary structure comprises 226 residues: Thiopurine S-methyltransferase (226 aa).

S-adenosyl-L-methionine contacts are provided by tryptophan 16, methionine 51, glutamate 72, and arginine 131.

The protein belongs to the class I-like SAM-binding methyltransferase superfamily. TPMT family.

It is found in the cytoplasm. It carries out the reaction S-adenosyl-L-methionine + a thiopurine = S-adenosyl-L-homocysteine + a thiopurine S-methylether.. The protein is Thiopurine S-methyltransferase of Francisella tularensis subsp. novicida (strain U112).